The following is a 49-amino-acid chain: Metallothionein (49 aa).

The interval 1-16 is beta; sequence SCAGSCKCKNCRCRSC. The a divalent metal cation site is built by Cys2, Cys6, Cys8, Cys11, Cys13, Cys16, Cys20, Cys21, Cys23, Cys24, Cys28, Cys31, Cys35, Cys37, Cys45, Cys47, and Cys48. An alpha region spans residues 17 to 49; the sequence is RKSCCSCCPAGCNNCAKGCVCKEPASSKCSCCH.

Belongs to the metallothionein superfamily. Type 1 family.

In terms of biological role, metallothioneins have a high content of cysteine residues that bind various heavy metals. The sequence is that of Metallothionein from Phasianus colchicus colchicus (Black-necked pheasant).